The following is a 309-amino-acid chain: Taste receptor type 2 member 20 (309 aa).

Topologically, residues 1 to 6 (MMSFLH) are extracellular. The helical transmembrane segment at 7–27 (IVFSILVVVAFILGNFANGFI) threads the bilayer. Topologically, residues 28–46 (ALINFIAWVKRQKISSADQ) are cytoplasmic. The chain crosses the membrane as a helical span at residues 47-67 (IIAALAVSRVGLLWVILLHWY). Over 68 to 79 (STVLNPTSSNLK) the chain is Extracellular. Residues 80 to 100 (VIIFISNAWAVTNHFSIWLAT) form a helical membrane-spanning segment. Over 101-125 (SLSIFYLLKIVNFSRLIFHHLKRKA) the chain is Cytoplasmic. A helical transmembrane segment spans residues 126-146 (KSVVLVIVLGSLFFLVCHLVM). The Extracellular segment spans residues 147–178 (KNTYINVWTEECEGNVTWKIKLRNAMHLSNLT). The chain crosses the membrane as a helical span at residues 179–199 (VAMLANLIPFTLTLISFLLLI). The Cytoplasmic portion of the chain corresponds to 200–229 (YSLCKHLKKMQLHGKGSQDPSTKIHIKALQ). The chain crosses the membrane as a helical span at residues 230–250 (TVTSFLILLAIYFLCLITSFW). Topologically, residues 251–259 (NSKMRPKEI) are extracellular. The helical transmembrane segment at 260–280 (VLMLCQAFGIIYPSFHSFILI) threads the bilayer. Residues 281-309 (WGNKTLKQTFLSVLWQVTCWAKGQNQSTP) are Cytoplasmic-facing.

The protein belongs to the G-protein coupled receptor T2R family.

The protein localises to the membrane. Receptor that may play a role in the perception of bitterness and is gustducin-linked. May play a role in sensing the chemical composition of the gastrointestinal content. The activity of this receptor may stimulate alpha gustducin, mediate PLC-beta-2 activation and lead to the gating of TRPM5. In Pan paniscus (Pygmy chimpanzee), this protein is Taste receptor type 2 member 20 (TAS2R20).